The chain runs to 242 residues: MSQILHPDAALVLFSGGQDSATCLAWALDRFARVETIGFDYGQRHLVELDSRAKLLDGLKTLKPEWVAKLGETHTLAIPTLAQVSDTALTRDVAIAMGADGLPNTFVPGRNLIFLTFAAALAYRRGIGAIIGGMCETDYSGYPDCRDATIKALGEAINLGMATQFELHTPLMWLDKAATWGLAQTLGGERLVDLIREHSHTCYLGERGARHDWGFGCGECPACQLRAKGWREFSAQRDARQG.

ATP is bound at residue 14-24 (FSGGQDSATCL). Residues C202, C217, C220, and C223 each coordinate Zn(2+).

The protein belongs to the QueC family. Zn(2+) is required as a cofactor.

It carries out the reaction 7-carboxy-7-deazaguanine + NH4(+) + ATP = 7-cyano-7-deazaguanine + ADP + phosphate + H2O + H(+). Its pathway is purine metabolism; 7-cyano-7-deazaguanine biosynthesis. Catalyzes the ATP-dependent conversion of 7-carboxy-7-deazaguanine (CDG) to 7-cyano-7-deazaguanine (preQ(0)). The sequence is that of 7-cyano-7-deazaguanine synthase from Rhodopseudomonas palustris (strain BisA53).